A 162-amino-acid polypeptide reads, in one-letter code: uncharacterized protein (162 aa).

3 consecutive transmembrane segments (helical) span residues A28–F50, L57–L76, and Y108–A130.

It localises to the cell membrane. This is an uncharacterized protein from Treponema pallidum (strain Nichols).